Consider the following 227-residue polypeptide: Type II restriction enzyme ScaI (227 aa).

A disordered region spans residues 12-35 (EARVGTRTGGPAMRPKTSDSPYFG).

The enzyme catalyses Endonucleolytic cleavage of DNA to give specific double-stranded fragments with terminal 5'-phosphates.. A P subtype restriction enzyme that recognizes the double-stranded sequence 5'-AGTACT-3' and cleaves after T-3. The sequence is that of Type II restriction enzyme ScaI from Streptomyces caespitosus.